A 228-amino-acid polypeptide reads, in one-letter code: Aquaporin Z 1 (228 aa).

2 consecutive transmembrane segments (helical) span residues 9-29 (FLGT…AAAF) and 34-54 (IGLL…AYAV). The short motif at 63–65 (NPA) is the NPA 1 element. The next 3 helical transmembrane spans lie at 82-102 (VGYI…LYVI), 129-149 (LTAA…IILG), and 156-176 (PVGF…LVSI). The NPA 2 motif lies at 184–186 (NPA). Residues 204–224 (WLFWVAPLIGAVIAGIVWKIV) form a helical membrane-spanning segment.

Belongs to the MIP/aquaporin (TC 1.A.8) family. As to quaternary structure, homotetramer.

The protein resides in the cell inner membrane. It catalyses the reaction H2O(in) = H2O(out). Functionally, channel that permits osmotically driven movement of water in both directions. It is involved in the osmoregulation and in the maintenance of cell turgor during volume expansion in rapidly growing cells. It mediates rapid entry or exit of water in response to abrupt changes in osmolarity. The protein is Aquaporin Z 1 of Rhizobium meliloti (strain 1021) (Ensifer meliloti).